Here is a 681-residue protein sequence, read N- to C-terminus: DNA ligase (681 aa).

Residues 45–49 (DFDFD), 94–95 (SL), and Glu120 contribute to the NAD(+) site. Lys122 functions as the N6-AMP-lysine intermediate in the catalytic mechanism. 4 residues coordinate NAD(+): Arg143, Glu177, Lys289, and Lys313. Zn(2+) is bound by residues Cys403, Cys406, Cys421, and Cys426. The 89-residue stretch at 593–681 (SDQQPFAGQS…SLKINFKNTI (89 aa)) folds into the BRCT domain.

This sequence belongs to the NAD-dependent DNA ligase family. LigA subfamily. The cofactor is Mg(2+). It depends on Mn(2+) as a cofactor.

It catalyses the reaction NAD(+) + (deoxyribonucleotide)n-3'-hydroxyl + 5'-phospho-(deoxyribonucleotide)m = (deoxyribonucleotide)n+m + AMP + beta-nicotinamide D-nucleotide.. In terms of biological role, DNA ligase that catalyzes the formation of phosphodiester linkages between 5'-phosphoryl and 3'-hydroxyl groups in double-stranded DNA using NAD as a coenzyme and as the energy source for the reaction. It is essential for DNA replication and repair of damaged DNA. This Leptospira borgpetersenii serovar Hardjo-bovis (strain JB197) protein is DNA ligase.